The primary structure comprises 239 residues: Ankyrin repeat domain-containing protein 49 (239 aa).

Serine 49 carries the post-translational modification Phosphoserine. ANK repeat units lie at residues 73 to 103 (DPSRLLLWAAEKNRLTTVRRLLSEKATHVNT), 107 to 136 (DEYTPLHRAAYSGHLDIVQELIAQGADVHA), 140 to 169 (DGWTPLHSACKWNNTRVASFLLQHDADINA), and 173 to 206 (GLLTPLHLAAGNRDSKDTLELLLMNRYVKPGLKN).

As to expression, widely expressed in fetus, at a high level in fetal liver, brain and lung.

It is found in the nucleus. Induces HBG1 expression. May have a role in spermatogenesis where it promotes autophagy in response to serum starvation, via the NF-kappaB pathway. This is Ankyrin repeat domain-containing protein 49 (ANKRD49) from Homo sapiens (Human).